The primary structure comprises 236 residues: Phosphoribosylaminoimidazole-succinocarboxamide synthase (236 aa).

The protein belongs to the SAICAR synthetase family.

It catalyses the reaction 5-amino-1-(5-phospho-D-ribosyl)imidazole-4-carboxylate + L-aspartate + ATP = (2S)-2-[5-amino-1-(5-phospho-beta-D-ribosyl)imidazole-4-carboxamido]succinate + ADP + phosphate + 2 H(+). The protein operates within purine metabolism; IMP biosynthesis via de novo pathway; 5-amino-1-(5-phospho-D-ribosyl)imidazole-4-carboxamide from 5-amino-1-(5-phospho-D-ribosyl)imidazole-4-carboxylate: step 1/2. This is Phosphoribosylaminoimidazole-succinocarboxamide synthase from Pseudomonas putida (strain W619).